The following is a 164-amino-acid chain: Elicitin-like protein 2 (164 aa).

The signal sequence occupies residues 1 to 22; that stretch reads MFSKTLVVLAAVAAVTVNGLTA. Intrachain disulfides connect cysteine 25-cysteine 91, cysteine 47-cysteine 76, and cysteine 71-cysteine 118. A disordered region spans residues 121-164; the sequence is ISGGGSTPTTAPPSGTTPTTPTTAPPTGTTPGVTPSPTTPKPAC. Low complexity predominate over residues 127-156; that stretch reads TPTTAPPSGTTPTTPTTAPPTGTTPGVTPS.

Belongs to the elicitin family.

The protein resides in the secreted. In terms of biological role, induces local and distal defense responses (incompatible hypersensitive reaction) in plants from the solanaceae and cruciferae families. Elicits leaf necrosis and causes the accumulation of pathogenesis-related proteins. Might interact with the lipidic molecules of the plasma membrane. In Pythium oligandrum (Mycoparasitic fungus), this protein is Elicitin-like protein 2 (POD-2).